We begin with the raw amino-acid sequence, 1099 residues long: Adenylate cyclase type 7 (1099 aa).

Residues 1-33 (MPAKGRYFLNEGDEGPDQAALYEKYRLTSLHGP) lie on the Cytoplasmic side of the membrane. The next 6 helical transmembrane spans lie at 34 to 54 (LLLL…SIAF), 63 to 83 (QVVL…YVLV), 95 to 117 (ALAL…DSLE), 122 to 142 (AWEQ…LLPL), 147 to 167 (AIVA…AVTR), and 178 to 198 (LGLQ…TGAF). Residues 199–595 (HKHQLQDASR…YRLVPIPRAR (397 aa)) are Cytoplasmic-facing. The Mg(2+) site is built by D286, I287, and D330. ATP is bound by residues 286–291 (DIVGFT), 328–330 (LGD), and R374. The interval 456–476 (DPRSQQPPPPSHHLSKPKGDA) is disordered. Positions 479–484 (KMRASV) are mediates regulation of adenylate cyclase activity by C5 alpha-induced G- beta and gamma pathway. A mediates regulation of adenylate cyclase activity by sphingosine 1-phosphate-induced G alpha 13 pathway region spans residues 493-501 (WGAARPFAH). The segment at 504 to 543 (HRESVSSSETPISNGRRQKAIPLRRHRAPDRSASPKGRLE) is disordered. Over residues 508–518 (VSSSETPISNG) the composition is skewed to polar residues. Residues 508 to 585 (VSSSETPISN…IFLEKGFERE (78 aa)) form a modulates adenylate cyclase activity by modulating the binding of G(s)alpha to the high-affinity G(s)alpha binding site in 7C1a/7C2 region. Positions 519 to 531 (RRQKAIPLRRHRA) are enriched in basic residues. Helical transmembrane passes span 596 to 616 (YDFA…LLVM), 621 to 641 (TLGV…SFCF), and 670 to 689 (LVLV…INMP). Residue N702 is glycosylated (N-linked (GlcNAc...) asparagine). 3 helical membrane passes run 719 to 738 (LLPY…SVFL), 747 to 766 (MLLT…SPCW), and 813 to 833 (DLKI…ILLS). Topologically, residues 834-1099 (RQIDYYCRLD…TAKFQGLGLN (266 aa)) are cytoplasmic. Residues K950, 1029-1031 (DIW), 1036-1040 (NVASR), and K1076 each bind ATP.

It belongs to the adenylyl cyclase class-4/guanylyl cyclase family. Mg(2+) serves as cofactor. Mn(2+) is required as a cofactor. In terms of processing, phosphorylated by PRKCD. In terms of tissue distribution, most abundant in heart, spleen and lung.

Its subcellular location is the membrane. It catalyses the reaction ATP = 3',5'-cyclic AMP + diphosphate. Activated by the G protein alpha subunit. Activated by the G protein beta and gamma subunit complex. Activated by GNA13 and GNA12. Ethanol and phorbol 12,13-dibutanoate significantly potentiate adenylate cyclase activity generated in response to the activation of the prostanoid receptor by the agonist prostaglandin E1(1-) in a PKC-dependent manner. Inhibited by lithium. Functionally, catalyzes the formation of cAMP in response to activation of G protein-coupled receptors. Functions in signaling cascades activated namely by thrombin and sphingosine 1-phosphate and mediates regulation of cAMP synthesis through synergistic action of the stimulatory G alpha protein with GNA13. Also, during inflammation, mediates zymosan-induced increase intracellular cAMP, leading to protein kinase A pathway activation in order to modulate innate immune responses through heterotrimeric G proteins G(12/13). Functions in signaling cascades activated namely by dopamine and C5 alpha chain and mediates regulation of cAMP synthesis through synergistic action of the stimulatory G protein with G beta:gamma complex. Functions, through cAMP response regulation, to keep inflammation under control during bacterial infection by sensing the presence of serum factors, such as the bioactive lysophospholipid (LPA) that regulate LPS-induced TNF-alpha production. However, it is also required for the optimal functions of B and T cells during adaptive immune responses by regulating cAMP synthesis in both B and T cells. In Mus musculus (Mouse), this protein is Adenylate cyclase type 7.